A 321-amino-acid chain; its full sequence is MIFLTLEHILTHISFSIVSIVITIHLITLLVDEIVGLYDSLEKGMISTFLCITGLLVTRWIYSGHLPLSNLYESLIFLSWSFSIIHMIPYFKNHKNHLSLVTAPSAIFTQGFATSGLLTEMHQSAILVPALQSQWLMMHVSMMVLSYGALLCGSLLSVALLVITFRKNIDIFGKRNHLLIGSFSFGEIQYTNERSNVLRNVSFLSLRNYRRYQLIRQLDNWSYRVISLGFIFLTIGILSGAVWANEAWGSYWNWDPKETWAFITWTIFAIYLHTRTNKNFQGADSAIVASIGFIIIWICYFGVNLLGIGLHSYGSFILTSN.

Transmembrane regions (helical) follow at residues 17–37 (IVSI…IVGL), 44–64 (GMIS…IYSG), 71–91 (LYES…IPYF), 98–118 (LSLV…SGLL), 143–163 (MVLS…LLVI), 225–245 (VISL…VWAN), 258–275 (ETWA…LHTR), and 286–306 (AIVA…VNLL).

It belongs to the CcmF/CycK/Ccl1/NrfE/CcsA family. May interact with Ccs1.

The protein localises to the plastid. The protein resides in the chloroplast thylakoid membrane. Its function is as follows. Required during biogenesis of c-type cytochromes (cytochrome c6 and cytochrome f) at the step of heme attachment. This is Cytochrome c biogenesis protein CcsA from Buxus microphylla (Littleleaf boxwood).